A 142-amino-acid chain; its full sequence is Hemoglobin subunit alpha (142 aa).

Positions 2–142 (VLSANDKSNV…VGNVLTSKYR (141 aa)) constitute a Globin domain. Histidine 59 lines the O2 pocket. Histidine 88 is a binding site for heme b.

This sequence belongs to the globin family. In terms of assembly, heterotetramer of two alpha chains and two beta chains. Red blood cells.

Involved in oxygen transport from the lung to the various peripheral tissues. The polypeptide is Hemoglobin subunit alpha (HBA) (Aptenodytes forsteri (Emperor penguin)).